The following is a 284-amino-acid chain: Agamous-like MADS-box protein AGL49 (284 aa).

A disordered region spans residues 1–20; it reads MAPRQKKPNKSDDDDGDLHR. The MADS-box domain maps to 21–66; it reads KKQSFFKQRFPGFKKKASELSVLCGNSVGFICYGPDNDLHVWPQSQ.

As to quaternary structure, interacts with MEE14/CBP1.

The protein localises to the nucleus. Its function is as follows. Probable transcription factor that may function in the maintenance of the proper function of the central cell in pollen tube attraction. This is Agamous-like MADS-box protein AGL49 from Arabidopsis thaliana (Mouse-ear cress).